Consider the following 241-residue polypeptide: Ubiquinone biosynthesis O-methyltransferase (241 aa).

S-adenosyl-L-methionine contacts are provided by Arg-46, Gly-66, Asp-87, and Met-131.

This sequence belongs to the methyltransferase superfamily. UbiG/COQ3 family.

The catalysed reaction is a 3-demethylubiquinol + S-adenosyl-L-methionine = a ubiquinol + S-adenosyl-L-homocysteine + H(+). The enzyme catalyses a 3-(all-trans-polyprenyl)benzene-1,2-diol + S-adenosyl-L-methionine = a 2-methoxy-6-(all-trans-polyprenyl)phenol + S-adenosyl-L-homocysteine + H(+). The protein operates within cofactor biosynthesis; ubiquinone biosynthesis. Its function is as follows. O-methyltransferase that catalyzes the 2 O-methylation steps in the ubiquinone biosynthetic pathway. The chain is Ubiquinone biosynthesis O-methyltransferase from Bordetella parapertussis (strain 12822 / ATCC BAA-587 / NCTC 13253).